Here is a 514-residue protein sequence, read N- to C-terminus: Arabinose import ATP-binding protein AraG (514 aa).

ABC transporter domains are found at residues 16 to 251 (LRFN…MVGR) and 251 to 507 (RDIQ…LPRH). 48-55 (GENGAGKS) provides a ligand contact to ATP.

The protein belongs to the ABC transporter superfamily. Arabinose importer (TC 3.A.1.2.2) family. The complex is composed of two ATP-binding proteins (AraG), two transmembrane proteins (AraH) and a solute-binding protein (AraF).

It localises to the cell inner membrane. The catalysed reaction is L-arabinose(out) + ATP + H2O = L-arabinose(in) + ADP + phosphate + H(+). Functionally, part of the ABC transporter complex AraFGH involved in arabinose import. Responsible for energy coupling to the transport system. The chain is Arabinose import ATP-binding protein AraG from Pseudomonas fluorescens (strain Pf0-1).